We begin with the raw amino-acid sequence, 368 residues long: D-alanine--D-alanine ligase (368 aa).

One can recognise an ATP-grasp domain in the interval 141–350 (KMIWDYSGLP…YNELIMHLIE (210 aa)). 176 to 231 (EKDLEYPLFIKPCRAGSSVGAGMVKNRNELLEQAEESFLWDNKILVEACIEAREVE) lines the ATP pocket. Residues aspartate 303, glutamate 317, and asparagine 319 each coordinate Mg(2+).

It belongs to the D-alanine--D-alanine ligase family. Mg(2+) serves as cofactor. It depends on Mn(2+) as a cofactor.

It is found in the cytoplasm. It carries out the reaction 2 D-alanine + ATP = D-alanyl-D-alanine + ADP + phosphate + H(+). Its pathway is cell wall biogenesis; peptidoglycan biosynthesis. In terms of biological role, cell wall formation. The chain is D-alanine--D-alanine ligase from Treponema denticola (strain ATCC 35405 / DSM 14222 / CIP 103919 / JCM 8153 / KCTC 15104).